The chain runs to 201 residues: MSEALNELASYIREARGALVAGSEVRYGELTLTTKAESLIALLTFLRDDVQCGFVSFIDVCGVDYPQRPDRFDVVYHLLSPRQNQRIRVKVATGENEPVPSITSVYPGADWFEREAYDMYGILFTGHPDLRRILTDYGFEGYPLRKDFPLTGFVEVRYDNEAKRVVYEPVELKQEFRNFDFLSPWEGTEYVLPGDEKAKSR.

It belongs to the complex I 30 kDa subunit family. As to quaternary structure, NDH-1 is composed of 14 different subunits. Subunits NuoB, C, D, E, F, and G constitute the peripheral sector of the complex.

The protein resides in the cell inner membrane. The catalysed reaction is a quinone + NADH + 5 H(+)(in) = a quinol + NAD(+) + 4 H(+)(out). In terms of biological role, NDH-1 shuttles electrons from NADH, via FMN and iron-sulfur (Fe-S) centers, to quinones in the respiratory chain. The immediate electron acceptor for the enzyme in this species is believed to be ubiquinone. Couples the redox reaction to proton translocation (for every two electrons transferred, four hydrogen ions are translocated across the cytoplasmic membrane), and thus conserves the redox energy in a proton gradient. In Sinorhizobium medicae (strain WSM419) (Ensifer medicae), this protein is NADH-quinone oxidoreductase subunit C.